The sequence spans 72 residues: Crustacean hyperglycemic hormone (72 aa).

Disulfide bonds link C7-C43, C23-C39, and C26-C52. V72 is modified (valine amide).

It localises to the secreted. Functionally, hormone found in the sinus gland of isopods and decapods which controls the blood sugar level. Has a secretagogue action over the amylase released from the midgut gland. May act as a stress hormone and may be involved in the control of molting and reproduction. In Penaeus schmitti (White shrimp), this protein is Crustacean hyperglycemic hormone.